Reading from the N-terminus, the 465-residue chain is Cerebellar degeneration-related protein 2-like (465 aa).

Coiled-coil stretches lie at residues 31-64, 91-142, and 188-266; these read AAEL…HEIE, ARDL…LEQL, and LEQE…YLLA. The disordered stretch occupies residues 282–315; the sequence is APEADDPQPGSGDDSNAQDGVSSPAASPSHAVRK. Phosphoserine occurs at positions 308, 318, and 344. Residues 350–377 adopt a coiled-coil conformation; the sequence is MSILREVDEQYHALLEKYEELLSKCRQH. The segment at 382–421 is disordered; sequence RHAGVQTSRPISRDSSWRDLLGGEESPGEGKAGEKSLSQH. S407 carries the phosphoserine modification.

It belongs to the CDR2 family.

The sequence is that of Cerebellar degeneration-related protein 2-like (Cdr2l) from Mus musculus (Mouse).